Reading from the N-terminus, the 460-residue chain is Cysteine--tRNA ligase (460 aa).

Residue cysteine 28 coordinates Zn(2+). Positions 30–40 match the 'HIGH' region motif; sequence VTIYDLCHIGH. Residues cysteine 209, histidine 234, and glutamate 238 each contribute to the Zn(2+) site. The 'KMSKS' region motif lies at 266–270; the sequence is KMSKS. Lysine 269 provides a ligand contact to ATP.

This sequence belongs to the class-I aminoacyl-tRNA synthetase family. As to quaternary structure, monomer. It depends on Zn(2+) as a cofactor.

It localises to the cytoplasm. The enzyme catalyses tRNA(Cys) + L-cysteine + ATP = L-cysteinyl-tRNA(Cys) + AMP + diphosphate. This chain is Cysteine--tRNA ligase, found in Shewanella frigidimarina (strain NCIMB 400).